Here is a 314-residue protein sequence, read N- to C-terminus: UPF0761 membrane protein VIBHAR_00593 (314 aa).

Transmembrane regions (helical) follow at residues 41-61, 104-124, 143-163, 185-205, 217-237, and 249-269; these read YLAYITLLSIVPMLTVLLSIL, MTAVGGAFLFVAALMLISNID, FSMYWMVLTLGPILVGASIAV, FLRWLPLLLSFFAFMGLYFLV, IGAAIAAVLFELSKKGFAFYI, and ALAAIPILFVWVYLCWLIVLI.

Belongs to the UPF0761 family.

It localises to the cell inner membrane. This Vibrio campbellii (strain ATCC BAA-1116) protein is UPF0761 membrane protein VIBHAR_00593.